The following is a 941-amino-acid chain: RNA-directed RNA polymerase (941 aa).

Residues 875 to 918 (SARQGGMGLPPPPPPPLGGGGMAGPPPPPFMGLRPESSVPTSVP) form a disordered region. Residues 905–918 (MGLRPESSVPTSVP) are compositionally biased toward low complexity.

In terms of assembly, forms a ribonucleoprotein complex with the 23S RNA, where a single polymerase molecule binds to a single viral RNA genome. Since the viral RNA is not encapsidated, ribonucleoprotein complex formation appears to be the strategy to survive in the host as persistent virus.

It localises to the host cytoplasm. It catalyses the reaction RNA(n) + a ribonucleoside 5'-triphosphate = RNA(n+1) + diphosphate. Its function is as follows. RNA-directed RNA polymerase that replicates the viral (+) and (-) genome. The chain is RNA-directed RNA polymerase from Saccharomyces 23S RNA narnavirus (ScNV-23S).